Consider the following 1543-residue polypeptide: MDEFCNSTFWNLSLLKSPEADLPLCFEQTVLVWIPLGFLWLLAPWQLYRIYRSRTKRFAITKFYLAKQVFVVCLLILAAIDLSLALTEDTGQATIPPVKYTNPILYLCTWLLVLVIQHCRQCCIQKNSWFLSMFWILSLLCGIFQFQTLIRALLQDSKSNMTYSCLFFVSYGFQIVILILSAFSESSDSTHAPSATASFLSSVTFSWYDSTVLKGYKHPLTIEDVWDIEENLKAKSLTSKFKTIMTKDLQKARQALQRRLKKSQQSPEGTSHGLTKKQSQSQDVLVLEDSKKKKKKSEATKDFPKSWLVKALFKTFYVVILKSFILKLAHDILLFLNPQLLKFLIGFVKDPDSYPWVGYIYAILMFSVTLIQSFFLQCYFQFCFVLGMTVRTTIIASVYKKALTLSNLARRQYTIGETVNLMSVDSQKLMDVTNYIHLLWSSVLQIALSIFFLWRELGPSILAGVGLMVLLVPVNGVLATKIRKIQVQNMKNKDKRLKIMNEILSGIKILKYFAWEPSFKEQVNSIRKKELRNLLRFSQLQTILIFILHLTPTLVSVITFSVYVLVDSQNVLNAEKAFTSITLFNILRFPLAMLPMVISSVIQASVSVDRLEQYLGSDDLDLSAIRHVCHFDKAVQFSEASFTWDRDLEATIQDVNLDIKPGQLVAVVGTVGSGKSSLISAMLGEMENVHGHITIKGSIAYVPQQAWIQNGTIKDNILFGSEYDEKKYQRVIEACALLPDLEMLPGGDMAEIGEKGINLSGGQKHRVSLARATYQDADIYILDDPLSAVDTHVGKHIFNKVVGPNGLLSGKTRILVTHGIHFLPQVDEIVVLGKGTILEKGSYSDLMDKKGVFAKNWKTFMKHSGPEGEATVDNDSEEEDGDCGLIPTVEEIPDDAASLTMRRENSLRRTLSRSSRSGSRRGKSLKSSLKIKSVNALNKKEEVVKGQKLIKKEFVETGKVKFSIYLKYLQAVGWWSLLFIVIFYVLNYVAFIGTNLWLSAWTSDSEKQNGTDNSPSQRDMRIGVFGALGIAQGIFLLSSSLWSIYACRNASKTLHRQLLTNILRAPMSFFDTTPTGRIVNRFAGDISTVDDTLPQTLRSWLLCFFGIVSTLVMICMATPIFIIIIIPLSILYVSVQVFYVATSRQLRRLDSVTKSPIYSHFSETVSGLPVIRAFEHQQRFLANSEKQIDTNQKCVFSWITSNRWLAIRLELVGNLIVFCSALLLVIYKNSLTGDTVGFVLSNALNITQTLNWLVRMTSEVETNIVAVERINEYINVDNEAPWVTDKKPPADWPKKGEIQFNNYQVRYRPELDLVLKGITCNIKSTEKVGVVGRTGAGKSSLTNCLFRILESAGGQIIIDGIDIASIGLHDLRGRLTIIPQDPILFSGNLRMNLDPFNKYSDEEIWRALELAHLKSFVAGLQLGLLHEVTEGGDNLSIGQRQLLCLGRAVLRKSKILVLDEATAAVDLETDSLIQTTIRNEFSQCTVITIAHRLHTIMDSDKIMVLDSGKIVEYGSPEELLSNMGPFYLMAKEAGIESVNHTEL.

The Extracellular portion of the chain corresponds to 1–26 (MDEFCNSTFWNLSLLKSPEADLPLCF). N-linked (GlcNAc...) asparagine glycans are attached at residues Asn-6 and Asn-11. A helical membrane pass occupies residues 27–47 (EQTVLVWIPLGFLWLLAPWQL). Over 48 to 67 (YRIYRSRTKRFAITKFYLAK) the chain is Cytoplasmic. The chain crosses the membrane as a helical span at residues 68-88 (QVFVVCLLILAAIDLSLALTE). Residues 89 to 92 (DTGQ) are Extracellular-facing. The helical transmembrane segment at 93 to 113 (ATIPPVKYTNPILYLCTWLLV) threads the bilayer. The Cytoplasmic portion of the chain corresponds to 114–125 (LVIQHCRQCCIQ). Residues 126–146 (KNSWFLSMFWILSLLCGIFQF) traverse the membrane as a helical segment. Residues 147–164 (QTLIRALLQDSKSNMTYS) lie on the Extracellular side of the membrane. N-linked (GlcNAc...) asparagine glycosylation is present at Asn-160. Residues 165–185 (CLFFVSYGFQIVILILSAFSE) traverse the membrane as a helical segment. The Cytoplasmic segment spans residues 186 to 311 (SSDSTHAPSA…DFPKSWLVKA (126 aa)). Residues 260 to 285 (LKKSQQSPEGTSHGLTKKQSQSQDVL) form a disordered region. Polar residues predominate over residues 263 to 283 (SQQSPEGTSHGLTKKQSQSQD). Phosphoserine is present on residues Ser-279 and Ser-281. A helical membrane pass occupies residues 312–332 (LFKTFYVVILKSFILKLAHDI). In terms of domain architecture, ABC transmembrane type-1 1 spans 320-603 (ILKSFILKLA…LPMVISSVIQ (284 aa)). At 333-358 (LLFLNPQLLKFLIGFVKDPDSYPWVG) the chain is on the extracellular side. Residues 359-379 (YIYAILMFSVTLIQSFFLQCY) traverse the membrane as a helical segment. Over 380-435 (FQFCFVLGMTVRTTIIASVYKKALTLSNLARRQYTIGETVNLMSVDSQKLMDVTNY) the chain is Cytoplasmic. A helical transmembrane segment spans residues 436-456 (IHLLWSSVLQIALSIFFLWRE). Residues 457-459 (LGP) are Extracellular-facing. Residues 460–480 (SILAGVGLMVLLVPVNGVLAT) traverse the membrane as a helical segment. Over 481 to 542 (KIRKIQVQNM…NLLRFSQLQT (62 aa)) the chain is Cytoplasmic. Residues 543 to 563 (ILIFILHLTPTLVSVITFSVY) form a helical membrane-spanning segment. Over 564–585 (VLVDSQNVLNAEKAFTSITLFN) the chain is Extracellular. The helical transmembrane segment at 586–606 (ILRFPLAMLPMVISSVIQASV) threads the bilayer. The Cytoplasmic portion of the chain corresponds to 607–969 (SVDRLEQYLG…VKFSIYLKYL (363 aa)). The 225-residue stretch at 635–859 (VQFSEASFTW…KGVFAKNWKT (225 aa)) folds into the ABC transporter 1 domain. Residue 669-676 (GTVGSGKS) participates in ATP binding. Ser-876 carries the phosphoserine modification. A disordered region spans residues 903–927 (RENSLRRTLSRSSRSGSRRGKSLKS). Low complexity predominate over residues 908-917 (RRTLSRSSRS). Phosphoserine occurs at positions 924 and 928. Residues 970 to 990 (QAVGWWSLLFIVIFYVLNYVA) form a helical membrane-spanning segment. Positions 977–1262 (LLFIVIFYVL…LVRMTSEVET (286 aa)) constitute an ABC transmembrane type-1 2 domain. Residues 991–1031 (FIGTNLWLSAWTSDSEKQNGTDNSPSQRDMRIGVFGALGIA) lie on the Extracellular side of the membrane. An N-linked (GlcNAc...) asparagine glycan is attached at Asn-1009. A helical membrane pass occupies residues 1032–1052 (QGIFLLSSSLWSIYACRNASK). The Cytoplasmic portion of the chain corresponds to 1053 to 1095 (TLHRQLLTNILRAPMSFFDTTPTGRIVNRFAGDISTVDDTLPQ). The helical transmembrane segment at 1096 to 1116 (TLRSWLLCFFGIVSTLVMICM) threads the bilayer. Position 1117 (Ala-1117) is a topological domain, extracellular. The chain crosses the membrane as a helical span at residues 1118–1138 (TPIFIIIIIPLSILYVSVQVF). Residues 1139–1209 (YVATSRQLRR…TSNRWLAIRL (71 aa)) lie on the Cytoplasmic side of the membrane. Residues 1210–1230 (ELVGNLIVFCSALLLVIYKNS) traverse the membrane as a helical segment. At 1231–1232 (LT) the chain is on the extracellular side. The chain crosses the membrane as a helical span at residues 1233–1253 (GDTVGFVLSNALNITQTLNWL). Topologically, residues 1254 to 1543 (VRMTSEVETN…GIESVNHTEL (290 aa)) are cytoplasmic. One can recognise an ABC transporter 2 domain in the interval 1298-1532 (IQFNNYQVRY…MGPFYLMAKE (235 aa)). 1332–1339 (GRTGAGKS) contributes to the ATP binding site. Residue Ser-1436 is modified to Phosphoserine.

This sequence belongs to the ABC transporter superfamily. ABCC family. Conjugate transporter (TC 3.A.1.208) subfamily. As to expression, expressed in liver.

It localises to the apical cell membrane. The catalysed reaction is an S-substituted glutathione(in) + ATP + H2O = an S-substituted glutathione(out) + ADP + phosphate + H(+). It catalyses the reaction taurolithocholate 3-sulfate(in) + ATP + H2O = taurolithocholate 3-sulfate(out) + ADP + phosphate + H(+). It carries out the reaction ATP + H2O + xenobioticSide 1 = ADP + phosphate + xenobioticSide 2.. The enzyme catalyses leukotriene C4(in) + ATP + H2O = leukotriene C4(out) + ADP + phosphate + H(+). The catalysed reaction is 17beta-estradiol 17-O-(beta-D-glucuronate)(in) + ATP + H2O = 17beta-estradiol 17-O-(beta-D-glucuronate)(out) + ADP + phosphate + H(+). It catalyses the reaction (4Z,15Z)-bilirubin IXalpha C8-beta-D-glucuronoside(in) + ATP + H2O = (4Z,15Z)-bilirubin IXalpha C8-beta-D-glucuronoside(out) + ADP + phosphate + H(+). It carries out the reaction (4Z,15Z)-bilirubin IXalpha C8,C12-beta-D-bisglucuronoside(in) + ATP + H2O = (4Z,15Z)-bilirubin IXalpha C8,C12-beta-D-bisglucuronoside(out) + ADP + phosphate + H(+). Its function is as follows. ATP-dependent transporter of the ATP-binding cassette (ABC) family that binds and hydrolyzes ATP to enable active transport of various substrates including many drugs, toxicants and endogenous compound across cell membranes. Transports a wide variety of conjugated organic anions such as sulfate-, glucuronide- and glutathione (GSH)-conjugates of endo- and xenobiotics substrates. Mediates hepatobiliary excretion of mono- and bis-glucuronidated bilirubin molecules and therefore play an important role in bilirubin detoxification. Mediates also hepatobiliary excretion of others glucuronide conjugates such as 17beta-estradiol 17-glucosiduronic acid and leukotriene C4. Transports sulfated bile salt such as taurolithocholate sulfate. Transports various anticancer drugs, such as anthracycline, vinca alkaloid and methotrexate and HIV-drugs such as protease inhibitors. This is ATP-binding cassette sub-family C member 2 from Mus musculus (Mouse).